The following is a 176-amino-acid chain: RNA pyrophosphohydrolase (176 aa).

Residues 6–149 form the Nudix hydrolase domain; that stretch reads GYRPNVGIVI…KRDVYRRVMK (144 aa). Positions 38–59 match the Nudix box motif; sequence GGINPGESPEQAMYRELYEEVG.

Belongs to the Nudix hydrolase family. RppH subfamily. A divalent metal cation serves as cofactor.

Its function is as follows. Accelerates the degradation of transcripts by removing pyrophosphate from the 5'-end of triphosphorylated RNA, leading to a more labile monophosphorylated state that can stimulate subsequent ribonuclease cleavage. In Photorhabdus laumondii subsp. laumondii (strain DSM 15139 / CIP 105565 / TT01) (Photorhabdus luminescens subsp. laumondii), this protein is RNA pyrophosphohydrolase.